The sequence spans 247 residues: Sugar fermentation stimulation protein homolog (247 aa).

The protein belongs to the SfsA family.

The chain is Sugar fermentation stimulation protein homolog from Methanococcoides burtonii (strain DSM 6242 / NBRC 107633 / OCM 468 / ACE-M).